Consider the following 456-residue polypeptide: RuvB-like helicase 1 (456 aa).

Residue Gly70–Thr77 coordinates ATP.

It belongs to the RuvB family. In terms of assembly, forms homohexameric rings. May form a dodecamer with rept made of two stacked hexameric rings. Component of the chromatin remodeling Ino80 complex.

It is found in the nucleus. The enzyme catalyses ATP + H2O = ADP + phosphate + H(+). Acts as a transcriptional coactivator in Wg signaling. In terms of biological role, proposed core component of the chromatin remodeling Ino80 complex which is involved in transcriptional regulation, DNA replication and probably DNA repair. This is RuvB-like helicase 1 from Aedes aegypti (Yellowfever mosquito).